Here is a 698-residue protein sequence, read N- to C-terminus: Polyribonucleotide nucleotidyltransferase (698 aa).

Residues Asp485 and Asp491 each contribute to the Mg(2+) site. The KH domain maps to 552–612 (PRVEMMTIPE…SDLKGAKSIV (61 aa)). Residues 622–690 (GMVYDGTVKK…KLGRLNLSYV (69 aa)) form the S1 motif domain.

Belongs to the polyribonucleotide nucleotidyltransferase family. The cofactor is Mg(2+).

Its subcellular location is the cytoplasm. It catalyses the reaction RNA(n+1) + phosphate = RNA(n) + a ribonucleoside 5'-diphosphate. Functionally, involved in mRNA degradation. Catalyzes the phosphorolysis of single-stranded polyribonucleotides processively in the 3'- to 5'-direction. The chain is Polyribonucleotide nucleotidyltransferase from Treponema denticola (strain ATCC 35405 / DSM 14222 / CIP 103919 / JCM 8153 / KCTC 15104).